Consider the following 504-residue polypeptide: Cytochrome P450 6B2 (504 aa).

Residue C445 participates in heme binding.

Belongs to the cytochrome P450 family. Heme is required as a cofactor.

It localises to the endoplasmic reticulum membrane. It is found in the microsome membrane. It carries out the reaction an organic molecule + reduced [NADPH--hemoprotein reductase] + O2 = an alcohol + oxidized [NADPH--hemoprotein reductase] + H2O + H(+). This chain is Cytochrome P450 6B2 (CYP6B2), found in Helicoverpa armigera (Cotton bollworm).